Reading from the N-terminus, the 358-residue chain is UDP-N-acetylglucosamine--N-acetylmuramyl-(pentapeptide) pyrophosphoryl-undecaprenol N-acetylglucosamine transferase (358 aa).

UDP-N-acetyl-alpha-D-glucosamine contacts are provided by residues 11-13, N125, R162, S196, and Q288; that span reads TAG.

Belongs to the glycosyltransferase 28 family. MurG subfamily.

It localises to the cell membrane. The enzyme catalyses di-trans,octa-cis-undecaprenyl diphospho-N-acetyl-alpha-D-muramoyl-L-alanyl-D-glutamyl-meso-2,6-diaminopimeloyl-D-alanyl-D-alanine + UDP-N-acetyl-alpha-D-glucosamine = di-trans,octa-cis-undecaprenyl diphospho-[N-acetyl-alpha-D-glucosaminyl-(1-&gt;4)]-N-acetyl-alpha-D-muramoyl-L-alanyl-D-glutamyl-meso-2,6-diaminopimeloyl-D-alanyl-D-alanine + UDP + H(+). Its pathway is cell wall biogenesis; peptidoglycan biosynthesis. Functionally, cell wall formation. Catalyzes the transfer of a GlcNAc subunit on undecaprenyl-pyrophosphoryl-MurNAc-pentapeptide (lipid intermediate I) to form undecaprenyl-pyrophosphoryl-MurNAc-(pentapeptide)GlcNAc (lipid intermediate II). In Leifsonia xyli subsp. xyli (strain CTCB07), this protein is UDP-N-acetylglucosamine--N-acetylmuramyl-(pentapeptide) pyrophosphoryl-undecaprenol N-acetylglucosamine transferase.